A 391-amino-acid chain; its full sequence is Alkanesulfonate monooxygenase (391 aa).

The protein belongs to the SsuD family.

It catalyses the reaction an alkanesulfonate + FMNH2 + O2 = an aldehyde + FMN + sulfite + H2O + 2 H(+). Its function is as follows. Catalyzes the desulfonation of aliphatic sulfonates. The sequence is that of Alkanesulfonate monooxygenase from Rhodopseudomonas palustris (strain TIE-1).